Consider the following 636-residue polypeptide: Probable cyclin-dependent serine/threonine-protein kinase DDB_G0278487 (636 aa).

Residues 1–41 (MPSQSNNVITSSTASSSMSSSSNSSDASSTSSSNTNNAHSS) form a disordered region. The 280-residue stretch at 64-343 (YEIISKIGEG…AEQALQSPFF (280 aa)) folds into the Protein kinase domain. Residues 70–78 (IGEGISGSV) and lysine 93 contribute to the ATP site. The active-site Proton acceptor is the aspartate 184. 4 disordered regions span residues 378-408 (EQQK…QKKQ), 473-506 (KRQQ…NNSY), 527-555 (SETE…DEED), and 579-636 (NNQQ…LTIH). The span at 473 to 485 (KRQQQEHEQRLQR) shows a compositional bias: basic and acidic residues. The span at 486–499 (EQQQQLNQLQQQKE) shows a compositional bias: low complexity. Over residues 529–555 (TESEYESDEEDFYTEEEVEDYSSDEED) the composition is skewed to acidic residues. Composition is skewed to low complexity over residues 579 to 594 (NNQQ…QQQQ) and 617 to 628 (NNNNGNNNNNNN).

It belongs to the protein kinase superfamily. CMGC Ser/Thr protein kinase family. CDC2/CDKX subfamily.

The enzyme catalyses L-seryl-[protein] + ATP = O-phospho-L-seryl-[protein] + ADP + H(+). It carries out the reaction L-threonyl-[protein] + ATP = O-phospho-L-threonyl-[protein] + ADP + H(+). This chain is Probable cyclin-dependent serine/threonine-protein kinase DDB_G0278487, found in Dictyostelium discoideum (Social amoeba).